The primary structure comprises 254 residues: MEWTDEGIVLGVRRHGESSAIVELLTRGHGRHLGLVRGGAGSKLRPLLQPGNSVSAVWRARLDEHLGYYVLEGTRMRAAMLLASSHAVYGVTHLASLARLLPERDPQPEIYERLERTLDDFDDVGEAAVHVIRFELTMLAELGFGLDLANCAATGVTSDLIYVSPKSGGAVSRAAGEPWRDKLLRLPPFLREGSAQRNDWSDQDLQDGFLLTGRFLLRNVLEPRGQGHSDARDGFINAVVRLRTRELAETAPPK.

Belongs to the RecO family.

Functionally, involved in DNA repair and RecF pathway recombination. This is DNA repair protein RecO from Rhodopseudomonas palustris (strain BisB18).